The chain runs to 67 residues: uncharacterized protein (67 aa).

This is an uncharacterized protein from Acidianus filamentous virus 2 (isolate Italy/Pozzuoli) (AFV-2).